A 103-amino-acid chain; its full sequence is Small ribosomal subunit protein uS10 (103 aa).

Belongs to the universal ribosomal protein uS10 family. As to quaternary structure, part of the 30S ribosomal subunit.

Its function is as follows. Involved in the binding of tRNA to the ribosomes. This chain is Small ribosomal subunit protein uS10, found in Neisseria meningitidis serogroup C / serotype 2a (strain ATCC 700532 / DSM 15464 / FAM18).